A 4885-amino-acid chain; its full sequence is Centrosome-associated protein CEP530 (4885 aa).

Positions 1437 to 1528 (VAEYEAETRG…GREKDQLRSE (92 aa)) form a coiled coil.

The protein localises to the cytoplasm. It is found in the cytoskeleton. It localises to the microtubule organizing center. Its subcellular location is the centrosome. Required for proper nuclei segregation during the cell division. Plays a role in coordination of karyokinesis and cytokinesis during the tachyzoite cell cycle. This Toxoplasma gondii (strain ATCC 50611 / Me49) protein is Centrosome-associated protein CEP530.